The following is a 59-amino-acid chain: MNFNKLFLIVILAALLLLGQTEAGRLKKLGKKIEKAGKRVFNAVQKGLPVAAGVQALGR.

Residues 1 to 23 form the signal peptide; the sequence is MNFNKLFLIVILAALLLLGQTEA. The residue at position 57 (Leu-57) is a Leucine amide.

Belongs to the cecropin family.

Its subcellular location is the secreted. Functionally, cecropins have lytic and antibacterial activity against several Gram-positive and Gram-negative bacteria. This is Cecropin-B1 (CECB1) from Culex pipiens pipiens (Northern house mosquito).